The following is a 300-amino-acid chain: tRNA dimethylallyltransferase (300 aa).

8 to 15 (GASASGKS) contacts ATP. 10–15 (SASGKS) provides a ligand contact to substrate. The segment at 33–36 (DSLS) is interaction with substrate tRNA.

This sequence belongs to the IPP transferase family. In terms of assembly, monomer. It depends on Mg(2+) as a cofactor.

The catalysed reaction is adenosine(37) in tRNA + dimethylallyl diphosphate = N(6)-dimethylallyladenosine(37) in tRNA + diphosphate. In terms of biological role, catalyzes the transfer of a dimethylallyl group onto the adenine at position 37 in tRNAs that read codons beginning with uridine, leading to the formation of N6-(dimethylallyl)adenosine (i(6)A). The chain is tRNA dimethylallyltransferase from Wolinella succinogenes (strain ATCC 29543 / DSM 1740 / CCUG 13145 / JCM 31913 / LMG 7466 / NCTC 11488 / FDC 602W) (Vibrio succinogenes).